Consider the following 538-residue polypeptide: Low affinity inorganic phosphate transporter 3 (538 aa).

Residues 1–24 are Cytoplasmic-facing; the sequence is MAKDQLQVLNALDVAKTQLYHFTA. The chain crosses the membrane as a helical span at residues 25–45; the sequence is IVIAGMGFFTDAYDLFCISLV. At 46 to 70 the chain is on the extracellular side; sequence TKLLGRIYYFHEGAPKPGILPSGIS. Residues 71–91 traverse the membrane as a helical segment; the sequence is AAVNGVAFIGTLSGQLFFGWL. The Cytoplasmic portion of the chain corresponds to 92 to 99; sequence GDKLGRKK. The chain crosses the membrane as a helical span at residues 100–120; sequence VYGMTLMLMVICSIACGLSFG. Residues 121-122 lie on the Extracellular side of the membrane; that stretch reads KT. The chain crosses the membrane as a helical span at residues 123 to 143; sequence ANGVIATLCFFRFWLGFGIGG. Residues 144 to 164 are Cytoplasmic-facing; that stretch reads DYPLSATIMSEYANKKTRGAF. Residues 165–185 form a helical membrane-spanning segment; sequence IAAVFAMQGFGILAGGIVALI. Topologically, residues 186 to 211 are extracellular; that stretch reads VSAGFKNAYPAPTYSAHGKDSTPPEA. A helical transmembrane segment spans residues 212 to 232; it reads DYVWRIIVMIGALPALLTYYW. The Cytoplasmic segment spans residues 233–292; that stretch reads RMKMPETARYTALVAKNTVKAAADMSKVLNVEIEEDKATVEKIEENGNSFGLFSKEFLRR. The chain crosses the membrane as a helical span at residues 293–313; the sequence is HGLHLLGTTSTWFLLDIAFYS. Over 314–345 the chain is Extracellular; it reads QNLFQKDIFSKIGWIPPPETMNALDEVFRIAR. The chain crosses the membrane as a helical span at residues 346-366; the sequence is AQTLIALCSTVPGYWFTVAFI. The Cytoplasmic portion of the chain corresponds to 367 to 371; the sequence is DKMGR. The chain crosses the membrane as a helical span at residues 372–392; sequence FAIQLMGSFFMTVFMFALAIP. Residues 393-402 are Extracellular-facing; it reads YDHWTKKENR. A helical transmembrane segment spans residues 403–423; that stretch reads IGFVIMYSLTFFFANFGPNAT. The Cytoplasmic portion of the chain corresponds to 424–442; that stretch reads TFVVPAEIFPARLRSTCHG. The chain crosses the membrane as a helical span at residues 443–463; that stretch reads ISAAAGKAGAIVGAFGFLYAA. The Extracellular portion of the chain corresponds to 464–483; sequence QSTDPKKVDAGYPTGIGVKN. The helical transmembrane segment at 484 to 504 threads the bilayer; it reads ALIVLGCVNFLGMLSTLLVPE. Residues 505–538 lie on the Cytoplasmic side of the membrane; that stretch reads SKGKSLEEMSKENEGEEENYGTETKGENAQTVPV. A compositionally biased stretch (basic and acidic residues) spans 506–517; it reads KGKSLEEMSKEN. The interval 506–538 is disordered; sequence KGKSLEEMSKENEGEEENYGTETKGENAQTVPV.

This sequence belongs to the major facilitator superfamily. Phosphate:H(+) symporter (TC 2.A.1.9) family. As to expression, expressed at low levels in non-mycorrhized roots.

The protein resides in the cell membrane. The catalysed reaction is phosphate(in) + H(+)(in) = phosphate(out) + H(+)(out). Low-affinity transporter for external inorganic phosphate (Pi) probably involved in the acquisition of phosphate released by arbuscular mycorrhizal (AM) fungi during AM symbiosis. This chain is Low affinity inorganic phosphate transporter 3, found in Petunia hybrida (Petunia).